A 442-amino-acid polypeptide reads, in one-letter code: Putative helicase 161L (442 aa).

The Helicase ATP-binding domain maps to Ile88 to Lys241. Cys101–Thr108 contributes to the ATP binding site. A DEAH box motif is present at residues Asp194–His197.

This sequence belongs to the DEAD box helicase family. DEAH subfamily.

In Invertebrate iridescent virus 6 (IIV-6), this protein is Putative helicase 161L.